Reading from the N-terminus, the 502-residue chain is Probable cytosol aminopeptidase (502 aa).

Lysine 269 and aspartate 274 together coordinate Mn(2+). The active site involves lysine 281. 3 residues coordinate Mn(2+): aspartate 292, aspartate 351, and glutamate 353. The active site involves arginine 355.

The protein belongs to the peptidase M17 family. Requires Mn(2+) as cofactor.

It is found in the cytoplasm. The enzyme catalyses Release of an N-terminal amino acid, Xaa-|-Yaa-, in which Xaa is preferably Leu, but may be other amino acids including Pro although not Arg or Lys, and Yaa may be Pro. Amino acid amides and methyl esters are also readily hydrolyzed, but rates on arylamides are exceedingly low.. The catalysed reaction is Release of an N-terminal amino acid, preferentially leucine, but not glutamic or aspartic acids.. Presumably involved in the processing and regular turnover of intracellular proteins. Catalyzes the removal of unsubstituted N-terminal amino acids from various peptides. The chain is Probable cytosol aminopeptidase from Shewanella frigidimarina (strain NCIMB 400).